Consider the following 1288-residue polypeptide: MASVAWAVLKVLLLLPTQTWSPVGAGNPPDCDSPLASALPRSSFSSSSELSSSHGPGFSRLNRRDGAGGWTPLVSNKYQWLQIDLGERMEVTAVATQGGYGSSDWVTSYLLMFSDGGRNWKQYRREESIWGFPGNTNADSVVHYRLQPPFEARFLRFLPLAWNPRGRIGMRIEVYGCAYKSEVVYFDGQSALLYTLDKKPLKPIRDVISLKFKAMQSNGILLHREGQHGNHITLELIKGKLVFFLNSGNAKLPSTIAPVTLTLGSLLDDQHWHSVLIELLDTQVNFTVDKHTHHFQAKGDSSNLDLNFEISFGGILSPGRSRAFTRKSFHGCLENLYYNGVDVTELAKKHKPQILMMGNVSFSCPQPQTVPVTFLSSRSYLALPGNSGEDKVSVTFQFRTWNRAGHLLFGELQRGSGSFVLFLKDGKLKLSLFQAGQSPRNVTAGAGLNDGQWHSVSFSAKWSHMNVVVDDDTAVQPLVAVLIDSGDTYYFGGCLGNSSGSGCKSPLGGFQGCLRLITIGDKAVDPILVQQGALGSFRDLQIDSCGITDRCLPSYCEHGGECSQSWDTFSCDCLGTGYTGETCHSSLYEQSCEAHKHRGNPSGLYYIDADGSGPLGPFLVYCNMTADSAWTVVRHGGPDAVTLRGAPSGHPLSAVSFAYAAGAGQLRAAVNLAERCEQRLALRCGTARRPDSRDGTPLSWWVGRTNETHTSWGGSLPDAQKCTCGLEGNCIDSQYYCNCDAGQNEWTSDTIVLSQKEHLPVTQIVMTDTGQPHSEADYTLGPLLCRGDKSFWNSASFNTETSYLHFPAFHGELTADVCFFFKTTVSSGVFMENLGITDFIRIELRAPTEVTFSFDVGNGPCEVTVQSPTPFNDNQWHHVRAERNVKGASLQVDQLPQKMQPAPADGHVRLQLNSQLFIGGTATRQRGFLGCIRSLQLNGVALDLEERATVTPGVEPGCAGHCSTYGHLCRNGGRCREKRRGVTCDCAFSAYDGPFCSNEISAYFATGSSMTYHFQEHYTLSENSSSLVSSLHRDVTLTREMITLSFRTTRTPSLLLYVSSFYEEYLSVILANNGSLQIRYKLDRHQNPDAFTFDFKNMADGQLHQVKINREEAVVMVEVNQSAKKQVILSSGTEFNAVKSLILGKVLEAAGADPDTRRAATSGFTGCLSAVRFGCAAPLKAALRPSGPSRVTVRGHVAPMARCAAGAASGSPARELAPRLAGGAGRSGPVDEGEPLVNADRRDSAVIGGVIAVEIFILLCITAIAIRIYQQRKLRKENESKVSKKEEC.

Residues 1–25 form the signal peptide; the sequence is MASVAWAVLKVLLLLPTQTWSPVGA. Positions 23-61 are disordered; the sequence is VGAGNPPDCDSPLASALPRSSFSSSSELSSSHGPGFSRL. Residues 26-1245 are Extracellular-facing; the sequence is GNPPDCDSPL…LVNADRRDSA (1220 aa). The F5/8 type C domain maps to 31-177; sequence CDSPLASALP…IGMRIEVYGC (147 aa). Cystine bridges form between Cys31/Cys177, Cys332/Cys364, Cys513/Cys545, Cys551/Cys562, Cys556/Cys571, and Cys573/Cys583. Low complexity predominate over residues 33–59; sequence SPLASALPRSSFSSSSELSSSHGPGFS. 2 Laminin G-like domains span residues 183–364 and 370–545; these read VVYF…SFSC and VPVT…IDSC. Asn359 carries an N-linked (GlcNAc...) asparagine glycan. An EGF-like 1 domain is found at 547–584; that stretch reads ITDRCLPSYCEHGGECSQSWDTFSCDCLGTGYTGETCH. The Fibrinogen C-terminal domain maps to 585–792; it reads SSLYEQSCEA…LLCRGDKSFW (208 aa). A glycan (N-linked (GlcNAc...) asparagine) is linked at Asn706. Residues 793 to 958 enclose the Laminin G-like 3 domain; the sequence is NSASFNTETS…TVTPGVEPGC (166 aa). Cystine bridges form between Cys931–Cys958, Cys962–Cys975, Cys969–Cys984, Cys986–Cys996, and Cys1167–Cys1203. Positions 959-997 constitute an EGF-like 2 domain; the sequence is AGHCSTYGHLCRNGGRCREKRRGVTCDCAFSAYDGPFCS. The 188-residue stretch at 1016–1203 folds into the Laminin G-like 4 domain; it reads EHYTLSENSS…RGHVAPMARC (188 aa). The tract at residues 1215–1236 is disordered; it reads ELAPRLAGGAGRSGPVDEGEPL. The helical transmembrane segment at 1246–1266 threads the bilayer; sequence VIGGVIAVEIFILLCITAIAI. Topologically, residues 1267 to 1288 are cytoplasmic; the sequence is RIYQQRKLRKENESKVSKKEEC.

The protein belongs to the neurexin family.

Its subcellular location is the membrane. In Homo sapiens (Human), this protein is Contactin-associated protein-like 3B (CNTNAP3B).